Consider the following 1040-residue polypeptide: Multidrug resistance protein MdtB (1040 aa).

The next 12 membrane-spanning stretches (helical) occupy residues 16-36 (FIMRPVATTLLMVAILLAGII), 347-367 (LMMAIALVVMIIYLFLRNIPA), 369-389 (IIPGVAVPLSLIGTFAVMVFL), 396-416 (LTLMALTIATGFVVDDAIVVI), 440-460 (IGFTIISLTFSLIAVLIPLLF), 472-492 (FAITLAVAILISAVVSLTLTP), 537-557 (WLTLSVALSTLLLSVLLWVFI), 863-883 (LGSTVWLIVAAVVAMYIVLGI), 888-908 (FIHPITILSTLPTAGVGALLA), 911-931 (IAGSELDVIAIIGIILLIGIV), 968-988 (ILMTTLAALLGALPLMLSTGV), and 998-1018 (IGMVGGLIVSQVLTLFTTPVI).

This sequence belongs to the resistance-nodulation-cell division (RND) (TC 2.A.6) family. MdtB subfamily. In terms of assembly, part of a tripartite efflux system composed of MdtA, MdtB and MdtC. MdtB forms a heteromultimer with MdtC.

The protein resides in the cell inner membrane. Its function is as follows. The MdtABC tripartite complex confers resistance against novobiocin and deoxycholate. The chain is Multidrug resistance protein MdtB from Escherichia coli (strain 55989 / EAEC).